Reading from the N-terminus, the 237-residue chain is Sulfhydrogenase 2 subunit delta (237 aa).

[4Fe-4S] cluster is bound by residues C11, C14, C83, C132, C160, C163, C170, and C179. The [3Fe-4S] cluster site is built by C188, C192, C199, and C202.

This sequence belongs to the [NiFe]/[NiFeSe] hydrogenase small subunit family. As to quaternary structure, dimer of heterotetramer of alpha, beta, gamma and delta subunits. The nickel-containing alpha and delta subunits constitute the hydrogenase activity. The beta and gamma subunits (flavin-containing dimer) constitute the sulfur reductase activity. The cofactor is Ni(2+). Requires [4Fe-4S] cluster as cofactor. [3Fe-4S] cluster serves as cofactor.

The protein localises to the cytoplasm. It catalyses the reaction H2 + NADP(+) = NADPH + H(+). It carries out the reaction H2 + NAD(+) = NADH + H(+). Functionally, part of a bifunctional enzyme complex that functions as a hydrogen-evolving hydrogenase with sulfur-reducing activity. May play a role in hydrogen cycling during fermentative growth. Activity exhibited with NAD in addition to NADPH. The alpha and delta subunits form the hydrogenase component that catalyzes the reduction of protons to evolve hydrogen. This Pyrococcus furiosus (strain ATCC 43587 / DSM 3638 / JCM 8422 / Vc1) protein is Sulfhydrogenase 2 subunit delta.